The primary structure comprises 270 residues: Regulatory protein RecX (270 aa).

It belongs to the RecX family.

It localises to the cytoplasm. In terms of biological role, modulates RecA activity. The chain is Regulatory protein RecX from Bacillus thuringiensis subsp. konkukian (strain 97-27).